Reading from the N-terminus, the 82-residue chain is Small ribosomal subunit protein eS27A (82 aa).

Residues 37–59 form a C4-type zinc finger; the sequence is CPGCLNITTVFSHAQTAVTCESC. Position 40 is an S-methylcysteine (cysteine 40).

This sequence belongs to the eukaryotic ribosomal protein eS27 family. As to quaternary structure, component of the small ribosomal subunit (SSU). Mature yeast ribosomes consist of a small (40S) and a large (60S) subunit. The 40S small subunit contains 1 molecule of ribosomal RNA (18S rRNA) and 33 different proteins (encoded by 57 genes). The large 60S subunit contains 3 rRNA molecules (25S, 5.8S and 5S rRNA) and 46 different proteins (encoded by 81 genes). Requires Zn(2+) as cofactor. Post-translationally, the N-terminus is not modified.

The protein resides in the cytoplasm. In terms of biological role, component of the ribosome, a large ribonucleoprotein complex responsible for the synthesis of proteins in the cell. The small ribosomal subunit (SSU) binds messenger RNAs (mRNAs) and translates the encoded message by selecting cognate aminoacyl-transfer RNA (tRNA) molecules. The large subunit (LSU) contains the ribosomal catalytic site termed the peptidyl transferase center (PTC), which catalyzes the formation of peptide bonds, thereby polymerizing the amino acids delivered by tRNAs into a polypeptide chain. The nascent polypeptides leave the ribosome through a tunnel in the LSU and interact with protein factors that function in enzymatic processing, targeting, and the membrane insertion of nascent chains at the exit of the ribosomal tunnel. The sequence is that of Small ribosomal subunit protein eS27A from Saccharomyces cerevisiae (strain ATCC 204508 / S288c) (Baker's yeast).